The chain runs to 272 residues: Phosphatidylglycerol--prolipoprotein diacylglyceryl transferase (272 aa).

Transmembrane regions (helical) follow at residues Trp24–Ala44, Tyr59–Tyr79, Phe102–Phe122, and Gly129–Phe149. Arg151 is a binding site for a 1,2-diacyl-sn-glycero-3-phospho-(1'-sn-glycerol). Helical transmembrane passes span Pro180–Trp200, Gly208–Trp228, and Met244–Ala264.

The protein belongs to the Lgt family.

It localises to the cell inner membrane. It carries out the reaction L-cysteinyl-[prolipoprotein] + a 1,2-diacyl-sn-glycero-3-phospho-(1'-sn-glycerol) = an S-1,2-diacyl-sn-glyceryl-L-cysteinyl-[prolipoprotein] + sn-glycerol 1-phosphate + H(+). It participates in protein modification; lipoprotein biosynthesis (diacylglyceryl transfer). Catalyzes the transfer of the diacylglyceryl group from phosphatidylglycerol to the sulfhydryl group of the N-terminal cysteine of a prolipoprotein, the first step in the formation of mature lipoproteins. This Wolinella succinogenes (strain ATCC 29543 / DSM 1740 / CCUG 13145 / JCM 31913 / LMG 7466 / NCTC 11488 / FDC 602W) (Vibrio succinogenes) protein is Phosphatidylglycerol--prolipoprotein diacylglyceryl transferase.